The chain runs to 103 residues: Large ribosomal subunit protein bL21 (103 aa).

The protein belongs to the bacterial ribosomal protein bL21 family. As to quaternary structure, part of the 50S ribosomal subunit. Contacts protein L20.

This protein binds to 23S rRNA in the presence of protein L20. The chain is Large ribosomal subunit protein bL21 from Ruminiclostridium cellulolyticum (strain ATCC 35319 / DSM 5812 / JCM 6584 / H10) (Clostridium cellulolyticum).